We begin with the raw amino-acid sequence, 1485 residues long: Putative E3 ubiquitin-protein ligase LIN-1 (1485 aa).

The segment covering 337–353 has biased composition (acidic residues); sequence EENEDDSDSELENESVD. Disordered regions lie at residues 337–363 and 384–417; these read EENE…IFSP and NQIP…KRDS. The U-box domain occupies 510–585; sequence KPPKDFVCPI…TSWKEQNPEL (76 aa). WD repeat units lie at residues 1204–1241, 1246–1283, 1409–1448, and 1454–1485; these read SSNG…PRVI, EHTK…IKCI, SLST…RVAS, and GHTK…WALD.

In terms of tissue distribution, expressed in roots and nodules, and at very low levels in calli and seedling shoots.

It carries out the reaction S-ubiquitinyl-[E2 ubiquitin-conjugating enzyme]-L-cysteine + [acceptor protein]-L-lysine = [E2 ubiquitin-conjugating enzyme]-L-cysteine + N(6)-ubiquitinyl-[acceptor protein]-L-lysine.. The protein operates within protein modification; protein ubiquitination. In terms of biological role, putative E3 ubiquitin-protein ligase involved in the rhizobial infection process. Plays an important role in the early steps of infection thread formation and in growth and differentiation of nodules. The sequence is that of Putative E3 ubiquitin-protein ligase LIN-1 from Lotus japonicus (Lotus corniculatus var. japonicus).